We begin with the raw amino-acid sequence, 141 residues long: Large ribosomal subunit protein uL16 (141 aa).

Basic residues predominate over residues 1 to 16 (MLMPRKPPKGFRKPHH). Positions 1–27 (MLMPRKPPKGFRKPHHPDRSGASKGGN) are disordered.

The protein belongs to the universal ribosomal protein uL16 family. In terms of assembly, part of the 50S ribosomal subunit.

Its function is as follows. Binds 23S rRNA and is also seen to make contacts with the A and possibly P site tRNAs. In Salinispora arenicola (strain CNS-205), this protein is Large ribosomal subunit protein uL16.